Reading from the N-terminus, the 859-residue chain is Low-density lipoprotein receptor-related protein 12 (859 aa).

Residues 1 to 32 (MACRWSTKESPRWRSALLLLFLAGVYGNGALA) form the signal peptide. The Extracellular portion of the chain corresponds to 33–492 (EHSENVHISG…ENCPVIVPTR (460 aa)). Cystine bridges form between Cys-47–Cys-76 and Cys-103–Cys-122. Positions 47–159 (CGETPEQIRA…KGFRLAYFSG (113 aa)) constitute a CUB 1 domain. Asn-75 is a glycosylation site (N-linked (GlcNAc...) asparagine). N-linked (GlcNAc...) asparagine glycosylation occurs at Asn-146. LDL-receptor class A domains are found at residues 165–201 (NCAC…EICA) and 214–255 (PCAY…IDCD). Disulfide bonds link Cys-166–Cys-178, Cys-173–Cys-191, Cys-185–Cys-200, Cys-215–Cys-232, Cys-222–Cys-245, Cys-239–Cys-254, and Cys-259–Cys-285. The CUB 2 domain maps to 259–372 (CGQWLKYFYG…RGFNATYQVD (114 aa)). 2 N-linked (GlcNAc...) asparagine glycosylation sites follow: Asn-284 and Asn-366. LDL-receptor class A domains are found at residues 374–411 (FCLP…TNCT), 412–449 (MCQK…KNCF), and 450–486 (FCQP…ENCP). 9 disulfides stabilise this stretch: Cys-375–Cys-388, Cys-382–Cys-401, Cys-395–Cys-410, Cys-413–Cys-426, Cys-420–Cys-439, Cys-433–Cys-448, Cys-451–Cys-463, Cys-458–Cys-476, and Cys-470–Cys-485. Asn-409 is a glycosylation site (N-linked (GlcNAc...) asparagine). Asn-441 carries N-linked (GlcNAc...) asparagine glycosylation. A helical membrane pass occupies residues 493 to 513 (VITAAVIGSLICGLLLVIALG). The Cytoplasmic portion of the chain corresponds to 514 to 859 (CTCKLYSLRM…TSDDEALLLC (346 aa)). Disordered regions lie at residues 623-678 (ADGD…LPQK), 693-723 (ASSS…SPAR), 748-770 (SSLS…REDD), and 801-823 (DQGQ…SNRD). Polar residues-rich tracts occupy residues 748 to 757 (SSLSQNQSPL) and 801 to 814 (DQGQ…NATN).

It belongs to the LDLR family. May interact with RACK1, ZFYVE9 and NMRK2. As to expression, widely expressed in heart, skeletal muscle, brain, lung, placenta and pancreas, but not in tissues consisting of a large number of epithelial cells, such as liver and kidney. Expressed at very low levels in a number of tumor-derived cell lines.

The protein localises to the membrane. Its subcellular location is the coated pit. Functionally, probable receptor, which may be involved in the internalization of lipophilic molecules and/or signal transduction. May act as a tumor suppressor. The polypeptide is Low-density lipoprotein receptor-related protein 12 (LRP12) (Homo sapiens (Human)).